A 167-amino-acid polypeptide reads, in one-letter code: Ribosome maturation factor RimM (167 aa).

The PRC barrel domain maps to 94–165; it reads ENEFYYSDII…KIIITPMEGL (72 aa).

This sequence belongs to the RimM family. In terms of assembly, binds ribosomal protein uS19.

It is found in the cytoplasm. An accessory protein needed during the final step in the assembly of 30S ribosomal subunit, possibly for assembly of the head region. Essential for efficient processing of 16S rRNA. May be needed both before and after RbfA during the maturation of 16S rRNA. It has affinity for free ribosomal 30S subunits but not for 70S ribosomes. This Staphylococcus aureus (strain MRSA252) protein is Ribosome maturation factor RimM.